The primary structure comprises 131 residues: Small ribosomal subunit protein uS8 (131 aa).

It belongs to the universal ribosomal protein uS8 family. As to quaternary structure, part of the 30S ribosomal subunit. Contacts proteins S5 and S12.

Functionally, one of the primary rRNA binding proteins, it binds directly to 16S rRNA central domain where it helps coordinate assembly of the platform of the 30S subunit. This Rhizorhabdus wittichii (strain DSM 6014 / CCUG 31198 / JCM 15750 / NBRC 105917 / EY 4224 / RW1) (Sphingomonas wittichii) protein is Small ribosomal subunit protein uS8.